A 372-amino-acid chain; its full sequence is Peptidyl-prolyl cis-trans isomerase D (372 aa).

Residues 14 to 178 enclose the PPIase cyclophilin-type domain; that stretch reads YFDISIGGKS…KEALIVDCGE (165 aa). 3 TPR repeats span residues 219–252, 271–304, and 309–342; these read AKAS…INEE, FSLN…GGVK, and AKAF…APND.

Belongs to the cyclophilin-type PPIase family. PPIase D subfamily.

It localises to the cytoplasm. The catalysed reaction is [protein]-peptidylproline (omega=180) = [protein]-peptidylproline (omega=0). Its function is as follows. PPIases accelerate the folding of proteins. It catalyzes the cis-trans isomerization of proline imidic peptide bonds in oligopeptides. The chain is Peptidyl-prolyl cis-trans isomerase D (CPR6) from Gibberella zeae (strain ATCC MYA-4620 / CBS 123657 / FGSC 9075 / NRRL 31084 / PH-1) (Wheat head blight fungus).